A 934-amino-acid polypeptide reads, in one-letter code: LPS-assembly protein LptD (934 aa).

A signal peptide spans 1 to 33 (MALKSPAFRRKFPLLVTGGLLALQPFATSYVVA). The segment at 52 to 86 (KSPVNNLPPRPVHDGAALTSGTEAPSAEAESADKP) is disordered.

The protein belongs to the LptD family. As to quaternary structure, component of the lipopolysaccharide transport and assembly complex. Interacts with LptE and LptA.

It is found in the cell outer membrane. Functionally, together with LptE, is involved in the assembly of lipopolysaccharide (LPS) at the surface of the outer membrane. The sequence is that of LPS-assembly protein LptD from Pseudomonas putida (strain W619).